Here is a 152-residue protein sequence, read N- to C-terminus: Transcriptional regulator MraZ (152 aa).

2 SpoVT-AbrB domains span residues 5-52 and 81-124; these read ATLV…PLPE and ASEC…DETT.

The protein belongs to the MraZ family. In terms of assembly, forms oligomers.

It localises to the cytoplasm. The protein localises to the nucleoid. Negatively regulates its own expression and that of the subsequent genes in the proximal part of the division and cell wall (dcw) gene cluster. Acts by binding directly to DNA. May also regulate the expression of genes outside the dcw cluster. This Shigella dysenteriae serotype 1 (strain Sd197) protein is Transcriptional regulator MraZ.